The sequence spans 352 residues: Glycerol-3-phosphate dehydrogenase [NAD(P)+] (352 aa).

The NADPH site is built by S11, W12, R32, and K105. Sn-glycerol 3-phosphate-binding residues include K105, G133, and S135. A137 provides a ligand contact to NADPH. Sn-glycerol 3-phosphate contacts are provided by K188, D241, S251, R252, and N253. Residue K188 is the Proton acceptor of the active site. R252 contributes to the NADPH binding site. NADPH-binding residues include V276 and E278.

It belongs to the NAD-dependent glycerol-3-phosphate dehydrogenase family.

Its subcellular location is the cytoplasm. The catalysed reaction is sn-glycerol 3-phosphate + NAD(+) = dihydroxyacetone phosphate + NADH + H(+). The enzyme catalyses sn-glycerol 3-phosphate + NADP(+) = dihydroxyacetone phosphate + NADPH + H(+). Its pathway is membrane lipid metabolism; glycerophospholipid metabolism. In terms of biological role, catalyzes the reduction of the glycolytic intermediate dihydroxyacetone phosphate (DHAP) to sn-glycerol 3-phosphate (G3P), the key precursor for phospholipid synthesis. The polypeptide is Glycerol-3-phosphate dehydrogenase [NAD(P)+] (Desulfitobacterium hafniense (strain Y51)).